Reading from the N-terminus, the 421-residue chain is Forkhead box protein fkh-4 (421 aa).

The fork-head DNA-binding region spans 118-218 (RPPISYVALC…SDADFDFFRK (101 aa)).

The protein localises to the nucleus. Transcription factor. Regulates expression of a class of small RNAs, known as 21U-RNAs, perhaps acting redundantly with fkh-3 and fkh-5. This chain is Forkhead box protein fkh-4, found in Caenorhabditis elegans.